Reading from the N-terminus, the 299-residue chain is Probable phosphate butyryltransferase (299 aa).

The protein belongs to the phosphate acetyltransferase and butyryltransferase family.

The catalysed reaction is butanoyl-CoA + phosphate = butanoyl phosphate + CoA. Its function is as follows. Catalyzes the conversion of butyryl-CoA through butyryl phosphate to butyrate. In Bacillus subtilis (strain 168), this protein is Probable phosphate butyryltransferase (yqiS).